Consider the following 195-residue polypeptide: Exosome complex component CSL4 (195 aa).

S21 carries the post-translational modification Phosphoserine. Positions 66–147 (DVGAVVTCKV…AQSNYLLTTA (82 aa)) constitute an S1 motif domain.

The protein belongs to the CSL4 family. As to quaternary structure, component of the RNA exosome core complex (Exo-9), composed of EXOSC1, EXOSC2, EXOSC3, EXOSC4, EXOSC5, EXOSC6, EXOSC7, EXOSC8 and EXOSC9; within the complex interacts with EXOSC6. The catalytically inactive RNA exosome core complex (Exo-9) associates with the catalytic subunit EXOSC10/RRP6. Exo-9 may associate with DIS3 to form the nucleolar exosome complex, or DIS3L to form the cytoplasmic exosome complex. Exo-9 is formed by a hexameric base ring consisting of the heterodimers EXOSC4-EXOSC9, EXOSC5-EXOSC8 and EXOSC6-EXOSC7, and a cap ring consisting of EXOSC1, EXOSC2 and EXOSC3. The RNA exosome complex associates with cofactors C1D/RRP47, MPHOSPH6/MPP6 and MTREX/MTR4. Interacts with DDX60.

The protein localises to the nucleus. The protein resides in the nucleolus. It is found in the cytoplasm. Non-catalytic component of the RNA exosome complex which has 3'-&gt;5' exoribonuclease activity and participates in a multitude of cellular RNA processing and degradation events. In the nucleus, the RNA exosome complex is involved in proper maturation of stable RNA species such as rRNA, snRNA and snoRNA, in the elimination of RNA processing by-products and non-coding 'pervasive' transcripts, such as antisense RNA species and promoter-upstream transcripts (PROMPTs), and of mRNAs with processing defects, thereby limiting or excluding their export to the cytoplasm. The RNA exosome may be involved in Ig class switch recombination (CSR) and/or Ig variable region somatic hypermutation (SHM) by targeting AICDA deamination activity to transcribed dsDNA substrates. In the cytoplasm, the RNA exosome complex is involved in general mRNA turnover and specifically degrades inherently unstable mRNAs containing AU-rich elements (AREs) within their 3' untranslated regions, and in RNA surveillance pathways, preventing translation of aberrant mRNAs. It seems to be involved in degradation of histone mRNA. The catalytic inactive RNA exosome core complex of 9 subunits (Exo-9) is proposed to play a pivotal role in the binding and presentation of RNA for ribonucleolysis, and to serve as a scaffold for the association with catalytic subunits and accessory proteins or complexes. EXOSC1 as peripheral part of the Exo-9 complex stabilizes the hexameric ring of RNase PH-domain subunits through contacts with EXOSC6 and EXOSC8. This is Exosome complex component CSL4 (Exosc1) from Mus musculus (Mouse).